A 216-amino-acid polypeptide reads, in one-letter code: Elongation factor Ts (216 aa).

Positions 81 to 84 (TDFV) are involved in Mg(2+) ion dislocation from EF-Tu.

It belongs to the EF-Ts family.

It is found in the cytoplasm. In terms of biological role, associates with the EF-Tu.GDP complex and induces the exchange of GDP to GTP. It remains bound to the aminoacyl-tRNA.EF-Tu.GTP complex up to the GTP hydrolysis stage on the ribosome. In Geobacter sp. (strain M21), this protein is Elongation factor Ts.